An 857-amino-acid polypeptide reads, in one-letter code: Leucine-rich repeat extensin-like protein 5 (857 aa).

The signal sequence occupies residues 1–31; that stretch reads MKTKMMMKNTSLIFVLLFITFFFTSISYSLS. The stretch at 32 to 53 is one LRR 1 repeat; sequence LTFNGDLSDNEVRLITQRQLLY. Asparagine 98 carries N-linked (GlcNAc...) asparagine glycosylation. LRR repeat units lie at residues 125–149, 150–172, 174–197, 198–221, 223–244, 246–267, 268–291, 292–315, 316–339, and 341–362; these read IRTV…LGLL, TDLA…RFNR, KLLF…VLQL, PSLK…LFSK, LDAI…LGDS, VSVI…LGDM, RNLE…IGRL, KNVT…IGGM, VSME…ICQL, and RLEN…CLGL. N-linked (GlcNAc...) asparagine glycosylation is present at asparagine 293. N-linked (GlcNAc...) asparagine glycosylation is present at asparagine 344. Disordered regions lie at residues 406–776 and 817–839; these read PPVV…EYSP and YSPP…YEGP. Pro residues-rich tracts occupy residues 408 to 571 and 579 to 768; these read VVVP…PTPI and PIIP…PQSH. The contains the Ser-Pro(4) repeats stretch occupies residues 615-857; it reads SPPPSTPTPV…YASPPPPPFY (243 aa).

Post-translationally, hydroxylated on proline residues in the S-P-P-P-P repeat. In terms of processing, O-glycosylated on hydroxyprolines. As to expression, expressed in roots, leaves and flowers.

The protein resides in the secreted. It localises to the cell wall. Functionally, modulates cell morphogenesis by regulating cell wall formation and assembly, and/or growth polarization. In Arabidopsis thaliana (Mouse-ear cress), this protein is Leucine-rich repeat extensin-like protein 5 (LRX5).